The following is a 151-amino-acid chain: 3-hydroxyacyl-[acyl-carrier-protein] dehydratase FabZ (151 aa).

Histidine 54 is a catalytic residue.

It belongs to the thioester dehydratase family. FabZ subfamily.

The protein resides in the cytoplasm. It catalyses the reaction a (3R)-hydroxyacyl-[ACP] = a (2E)-enoyl-[ACP] + H2O. Its function is as follows. Involved in unsaturated fatty acids biosynthesis. Catalyzes the dehydration of short chain beta-hydroxyacyl-ACPs and long chain saturated and unsaturated beta-hydroxyacyl-ACPs. This Buchnera aphidicola subsp. Acyrthosiphon pisum (strain 5A) protein is 3-hydroxyacyl-[acyl-carrier-protein] dehydratase FabZ.